Here is a 603-residue protein sequence, read N- to C-terminus: Flavin-dependent halogenase chlA (603 aa).

The FAD site is built by Gly16, Ala19, and Glu59. 2 residues coordinate chloride: Thr352 and Gly353.

The protein belongs to the flavin-dependent halogenase family.

It catalyses the reaction 2,4,6-trihydroxyphenylhexan-1-one + FADH2 + chloride + O2 = (3-chloro-2,4,6-trihydroxyphenyl)hexan-1-one + FAD + 2 H2O + H(+). The enzyme catalyses (3-chloro-2,4,6-trihydroxyphenyl)hexan-1-one + FADH2 + chloride + O2 = (3,5-dichloro-2,4,6-trihydroxyphenyl)hexan-1-one + FAD + 2 H2O. Functionally, flavin-dependent halogenase; part of the gene cluster that mediates the biosynthesis of DIF-1 (Differentiation Inducing Factor-1), a signal molecule involved in the differentiation of pstO (prestalk-O) cells. The three-step process begins with the formation of (2,4,6-trihydroxyphenyl)-1-hexan-1-one (THPH) by the polyketide synthase StlB. THPH is then dichlorinated by the flavin-dependent halogenase ChlA. The last step of DIF-1 biosynthesis is the O-methylation of dichloro-THPH (or des-methyl-DIF-1) by the methyltransferase DmtA to yield DIF-1. In Dictyostelium discoideum (Social amoeba), this protein is Flavin-dependent halogenase chlA.